Reading from the N-terminus, the 530-residue chain is Sulfate adenylyltransferase (530 aa).

Positions methionine 1–tyrosine 178 are N-terminal. The segment at aspartate 179–lysine 410 is catalytic. A sulfate-binding site is contributed by glutamine 208. Residues glutamine 208–asparagine 211 and glycine 304–histidine 307 each bind ATP. Residues threonine 209, arginine 210, and asparagine 211 contribute to the active site. Arginine 210 serves as a coordination point for sulfate. Alanine 308 serves as a coordination point for sulfate. An ATP-binding site is contributed by valine 348. Positions glutamine 411–serine 530 are required for oligomerization; adenylyl-sulfate kinase-like.

It belongs to the sulfate adenylyltransferase family. Homohexamer. Dimer of trimers.

The protein localises to the cytoplasm. The catalysed reaction is sulfate + ATP + H(+) = adenosine 5'-phosphosulfate + diphosphate. It participates in sulfur metabolism; hydrogen sulfide biosynthesis; sulfite from sulfate: step 1/3. In terms of biological role, catalyzes the first intracellular reaction of sulfate assimilation, forming adenosine-5'-phosphosulfate (APS) from inorganic sulfate and ATP. Plays an important role in sulfate activation as a component of the biosynthesis pathway of sulfur-containing amino acids. The sequence is that of Sulfate adenylyltransferase from Debaryomyces hansenii (strain ATCC 36239 / CBS 767 / BCRC 21394 / JCM 1990 / NBRC 0083 / IGC 2968) (Yeast).